The primary structure comprises 234 residues: uncharacterized protein (234 aa).

The chain crosses the membrane as a helical span at residues 13–32 (KSINYYIFFFQYTLVYNTIQ). Disordered stretches follow at residues 102-130 (HSKTTSLPFSSSSPQSSSSSSSSSSSSNS) and 159-185 (ESDSKSDSEFDSESNSDFDSESESEYE). A compositionally biased stretch (low complexity) spans 103 to 130 (SKTTSLPFSSSSPQSSSSSSSSSSSSNS). Over residues 167 to 185 (EFDSESNSDFDSESESEYE) the composition is skewed to acidic residues.

The protein resides in the membrane. This is an uncharacterized protein from Dictyostelium discoideum (Social amoeba).